The sequence spans 285 residues: HTH-type transcriptional regulator MurR (285 aa).

The region spanning 1–77 (MLYLTKIRNA…MALIGEYSAS (77 aa)) is the HTH rpiR-type domain. Residues 37–56 (SRKMAKQLGISQSSIVKFAQ) constitute a DNA-binding region (H-T-H motif). The 141-residue stretch at 128-268 (IIEVISKAPF…FVGLVQLNDV (141 aa)) folds into the SIS domain.

As to quaternary structure, homotetramer.

Its pathway is amino-sugar metabolism; N-acetylmuramate degradation [regulation]. In terms of biological role, represses the expression of the murPQ operon involved in the uptake and degradation of N-acetylmuramic acid (MurNAc). Binds to two adjacent inverted repeats within the operator region. MurNAc 6-phosphate, the substrate of MurQ, is the specific inducer that weakens binding of MurR to the operator. This Escherichia coli O157:H7 protein is HTH-type transcriptional regulator MurR.